Reading from the N-terminus, the 624-residue chain is Galactan 5-O-arabinofuranosyltransferase (624 aa).

The next 13 helical transmembrane spans lie at 5 to 25 (VLGQMVLAVLMASAVAGVAIA), 43 to 63 (ALTTVGQFGCLAGLFAAGLLW), 73 to 93 (LGALAFISAFSVVTLAMPLGA), 127 to 147 (IGLPPFYPAGWFWLGGRIAAA), 159 to 179 (WSIVSITIAVALALVLWAAMI), 181 to 201 (FEYALVATAASTAAMLAYAST), 203 to 223 (PYAAIITVLMPPVFVLAWAGL), 234 to 254 (AIVGVGIFLGVAALFYTLLLV), 280 to 300 (LAVIAVISGAIALLTWAPYLL), 326 to 346 (FPMFSLTLHGALCMLGTVWLV), 355 to 375 (AGALAVAVVAVYAWSLLSMLT), 391 to 411 (LTVLLTTAGAFGFIEATLAIA), and 422 to 442 (VVAAATAVGAIGAVTFSQDIP).

It belongs to the glycosyltransferase 85 family.

It is found in the cell membrane. The enzyme catalyses Adds an alpha-D-arabinofuranosyl group from trans,octacis-decaprenylphospho-beta-D-arabinofuranose at the 5-O-position of the eighth, tenth and twelfth galactofuranose unit of the galactofuranan chain of [beta-D-galactofuranosyl-(1-&gt;5)-beta-D-galactofuranosyl-(1-&gt;6)]14-beta-D-galactofuranosyl-(1-&gt;5)-beta-D-galactofuranosyl-(1-&gt;4)-alpha-L-rhamnopyranosyl-(1-&gt;3)-N-acetyl-alpha-D-glucosaminyl-diphospho-trans,octacis-decaprenol.. The protein operates within cell wall biogenesis; cell wall polysaccharide biosynthesis. Involved in the biosynthesis of the arabinogalactan (AG) region of the mycolylarabinogalactan-peptidoglycan (mAGP) complex, an essential component of the mycobacterial cell wall. Catalyzes the addition of the first key arabinofuranosyl (Araf) residue from the sugar donor decaprenyl-phospho-arabinose (DPA) on the C-5 of a 6-linked galactofuranosyl (Galf) of the galactan domain, thus 'priming' the galactan for further elaboration by other arabinofuranosyltransferases. It is not able to add an Araf residue to a terminal Galf. The polypeptide is Galactan 5-O-arabinofuranosyltransferase (Mycolicibacterium smegmatis (strain ATCC 700084 / mc(2)155) (Mycobacterium smegmatis)).